A 292-amino-acid chain; its full sequence is Homoserine kinase (292 aa).

Residue 84–94 (PLSRGLGSSSA) coordinates ATP.

It belongs to the GHMP kinase family. Homoserine kinase subfamily.

The protein resides in the cytoplasm. It carries out the reaction L-homoserine + ATP = O-phospho-L-homoserine + ADP + H(+). It participates in amino-acid biosynthesis; L-threonine biosynthesis; L-threonine from L-aspartate: step 4/5. In terms of biological role, catalyzes the ATP-dependent phosphorylation of L-homoserine to L-homoserine phosphate. This is Homoserine kinase from Campylobacter jejuni subsp. jejuni serotype O:6 (strain 81116 / NCTC 11828).